Consider the following 393-residue polypeptide: ATP phosphoribosyltransferase regulatory subunit (393 aa).

Belongs to the class-II aminoacyl-tRNA synthetase family. HisZ subfamily. In terms of assembly, heteromultimer composed of HisG and HisZ subunits.

It is found in the cytoplasm. Its pathway is amino-acid biosynthesis; L-histidine biosynthesis; L-histidine from 5-phospho-alpha-D-ribose 1-diphosphate: step 1/9. Its function is as follows. Required for the first step of histidine biosynthesis. May allow the feedback regulation of ATP phosphoribosyltransferase activity by histidine. This Synechococcus sp. (strain RCC307) protein is ATP phosphoribosyltransferase regulatory subunit.